A 132-amino-acid polypeptide reads, in one-letter code: Small ribosomal subunit protein uS8c (132 aa).

Belongs to the universal ribosomal protein uS8 family. In terms of assembly, part of the 30S ribosomal subunit.

It localises to the plastid. Its subcellular location is the chloroplast. Functionally, one of the primary rRNA binding proteins, it binds directly to 16S rRNA central domain where it helps coordinate assembly of the platform of the 30S subunit. This is Small ribosomal subunit protein uS8c (rps8) from Platanus occidentalis (Sycamore).